The chain runs to 782 residues: Spastin (782 aa).

The disordered stretch occupies residues 1-103 (MVRTKNQSSS…GNAPRGGNSS (103 aa)). The Cytoplasmic portion of the chain corresponds to 1 to 115 (MVRTKNQSSS…KQNLYVVSFP (115 aa)). Positions 1 to 212 (MVRTKNQSSS…RAIQPLEMAG (212 aa)) are required for localization to punctate cytoplasmic foci. Low complexity predominate over residues 8-19 (SSSSSASSSTKS). Positions 25-34 (GGTTNRSRSC) are enriched in polar residues. 2 stretches are compositionally biased toward low complexity: residues 44–75 (SKSS…GSSP) and 84–93 (TTDADLTPTS). Residues 116–136 (IIFLFNVLRSLIYQLFCIFRY) constitute an intramembrane region (helical). At 137–782 (LYGASTKVIY…WSQDYGDITI (646 aa)) the chain is on the cytoplasmic side. Residues 210-782 (MAGNRAGGNY…WSQDYGDITI (573 aa)) are sufficient for interaction with microtubules and microtubule severing. In terms of domain architecture, MIT spans 235-310 (HRRAFEYISK…SMARDRLHFL (76 aa)). The tract at residues 325 to 479 (KEQQQKKKSP…GSGSGASTPM (155 aa)) is disordered. Residues 334-343 (PQQQPQQQQQ) show a composition bias toward low complexity. Polar residues-rich tracts occupy residues 408–426 (NKSQ…STSV) and 447–463 (QFSS…RTPI). Residues 465 to 479 (NNAAGGSGSGASTPM) form a required for interaction with microtubules region. Residue 547-554 (GPPGNGKT) participates in ATP binding.

This sequence belongs to the AAA ATPase family. Spastin subfamily. As to quaternary structure, homohexamer. The homohexamer is stabilized by ATP-binding. The homohexamer may adopt a ring conformation through which microtubules pass prior to being severed. Interacts with microtubules. Interacts with atl; may be involved in microtubule dynamics.

Its subcellular location is the membrane. It is found in the cytoplasm. The protein localises to the cytoskeleton. It localises to the microtubule organizing center. The protein resides in the centrosome. Its subcellular location is the chromosome. It is found in the lipid droplet. It catalyses the reaction n ATP + n H2O + a microtubule = n ADP + n phosphate + (n+1) alpha/beta tubulin heterodimers.. ATP-dependent microtubule severing protein. Stimulates microtubule minus-end depolymerization and poleward microtubule flux in the mitotic spindle. Regulates microtubule stability in the neuromuscular junction synapse. Involved in lipid metabolism by regulating the size and distribution of lipid droplets. Involved in axon regeneration by regulating microtubule severing. The protein is Spastin of Drosophila grimshawi (Hawaiian fruit fly).